The chain runs to 229 residues: tRNA pseudouridine synthase B (229 aa).

The Nucleophile role is filled by Asp42.

Belongs to the pseudouridine synthase TruB family. Type 1 subfamily.

The catalysed reaction is uridine(55) in tRNA = pseudouridine(55) in tRNA. Responsible for synthesis of pseudouridine from uracil-55 in the psi GC loop of transfer RNAs. The chain is tRNA pseudouridine synthase B from Ureaplasma urealyticum serovar 10 (strain ATCC 33699 / Western).